The sequence spans 239 residues: MDYVKGIFKNRPNRFIAEVEVDGKIEIAHVPNTGRCKELLVDGAAVYLKPSDNPKRKTRFTLHFVVNKGELVSLYSQEANSIVYDAILDGKIKELQGYSYHQREKQVDDSRIDIYLANQEDDCCGMEFLVDSCYIEVKGVTLIVDGEARFPDAPTERGAKHLKELIKLKNDGNRAVVFFLIQHPAGNDFRPNWENDPKFSQTLVEAENAGVEILVYKCNNTLEGIELVPKSLDYDLSRK.

The protein belongs to the SfsA family.

This Methanobrevibacter smithii (strain ATCC 35061 / DSM 861 / OCM 144 / PS) protein is Sugar fermentation stimulation protein homolog.